A 264-amino-acid chain; its full sequence is Thymidylate synthase (264 aa).

Arginine 21 provides a ligand contact to dUMP. Histidine 51 serves as a coordination point for (6R)-5,10-methylene-5,6,7,8-tetrahydrofolate. 126-127 contacts dUMP; the sequence is RR. Cysteine 146 acts as the Nucleophile in catalysis. DUMP contacts are provided by residues 166 to 169, asparagine 177, and 207 to 209; these read RSCD and HLY. Aspartate 169 contributes to the (6R)-5,10-methylene-5,6,7,8-tetrahydrofolate binding site. Alanine 263 provides a ligand contact to (6R)-5,10-methylene-5,6,7,8-tetrahydrofolate.

It belongs to the thymidylate synthase family. Bacterial-type ThyA subfamily. In terms of assembly, homodimer.

The protein resides in the cytoplasm. It carries out the reaction dUMP + (6R)-5,10-methylene-5,6,7,8-tetrahydrofolate = 7,8-dihydrofolate + dTMP. The protein operates within pyrimidine metabolism; dTTP biosynthesis. In terms of biological role, catalyzes the reductive methylation of 2'-deoxyuridine-5'-monophosphate (dUMP) to 2'-deoxythymidine-5'-monophosphate (dTMP) while utilizing 5,10-methylenetetrahydrofolate (mTHF) as the methyl donor and reductant in the reaction, yielding dihydrofolate (DHF) as a by-product. This enzymatic reaction provides an intracellular de novo source of dTMP, an essential precursor for DNA biosynthesis. The protein is Thymidylate synthase of Salmonella typhi.